We begin with the raw amino-acid sequence, 201 residues long: FMN-dependent NADH:quinone oxidoreductase (201 aa).

Residues serine 10, 16 to 18 (SQS), 96 to 99 (MYNF), and 140 to 143 (SRGG) contribute to the FMN site.

This sequence belongs to the azoreductase type 1 family. As to quaternary structure, homodimer. Requires FMN as cofactor.

It catalyses the reaction 2 a quinone + NADH + H(+) = 2 a 1,4-benzosemiquinone + NAD(+). The catalysed reaction is N,N-dimethyl-1,4-phenylenediamine + anthranilate + 2 NAD(+) = 2-(4-dimethylaminophenyl)diazenylbenzoate + 2 NADH + 2 H(+). Functionally, quinone reductase that provides resistance to thiol-specific stress caused by electrophilic quinones. In terms of biological role, also exhibits azoreductase activity. Catalyzes the reductive cleavage of the azo bond in aromatic azo compounds to the corresponding amines. This chain is FMN-dependent NADH:quinone oxidoreductase, found in Escherichia coli O157:H7.